We begin with the raw amino-acid sequence, 454 residues long: Anthocyanidin 3-O-galactosyltransferase 3GT6 (454 aa).

The N-terminal stretch at 1–21 is a signal peptide; it reads MTNSSKGRHVAVLPFPFSTHA. An anthocyanidin-binding residues include Ser18 and His20. His20 (proton acceptor) is an active-site residue. Residue Asp117 is the Charge relay of the active site. An anthocyanidin is bound at residue His148. Residues Ala331, Gln333, His348, Trp351, Asn352, Ser353, and Glu356 each coordinate UDP-alpha-D-glucose. Gly371 is an an anthocyanidin binding site. Asp372 lines the UDP-alpha-D-glucose pocket. Asn441 carries an N-linked (GlcNAc...) asparagine glycan.

It belongs to the UDP-glycosyltransferase family. In terms of assembly, monomer. As to expression, mostly expressed in leaves and flowers and, to a lower extent, in roots. In flowers, mainly observed in petals, stamens and scapes, and at lower levels in pistils and toruses.

The enzyme catalyses cyanidin + UDP-alpha-D-galactose = cyanidin 3-O-beta-D-galactoside + UDP + H(+). It catalyses the reaction cyanidin + UDP-alpha-D-glucose = cyanidin 3-O-beta-D-glucoside + UDP + H(+). The catalysed reaction is delphinidin + UDP-alpha-D-glucose = delphinidin 3-O-beta-D-glucoside + UDP. It carries out the reaction peonidin + UDP-alpha-D-glucose = peonidin 3-O-beta-D-glucoside + UDP. The enzyme catalyses pelargonidin + UDP-alpha-D-glucose = pelargonidin 3-O-beta-D-glucoside + UDP. It catalyses the reaction delphinidin + UDP-alpha-D-galactose = delphinidin 3-O-beta-D-galactoside + UDP + H(+). The catalysed reaction is pelargonidin + UDP-alpha-D-galactose = pelargonidin 3-O-beta-D-galactoside betaine + UDP. It carries out the reaction peonidin + UDP-alpha-D-galactose = peonidin 3-O-beta-D-galactoside + UDP. The enzyme catalyses petunidin + UDP-alpha-D-galactose = petunidin 3-O-beta-D-galactoside + UDP. It catalyses the reaction petunidin + UDP-alpha-D-glucose = petunidin 3-O-beta-D-glucoside + UDP. The catalysed reaction is an anthocyanidin + UDP-alpha-D-glucose + H(+) = an anthocyanidin 3-O-beta-D-glucoside + UDP. It carries out the reaction an anthocyanidin + UDP-alpha-D-galactose = an anthocyanidin 3-O-beta-D-galactoside + UDP. It functions in the pathway pigment biosynthesis; anthocyanin biosynthesis. In terms of biological role, flavonoid 3-O-glycosyltransferase involved in the biosynthesis of anthocyanins conferring flower red/pink colors, mainly anthocyanidin 3-O-glycosides. Catalyzes the addition of UDP-sugar to the 3-OH of anthocyanidin, with a preference for UDP-galactose (UDP-Gal) as sugar donor and cyanidin as substrate; able to use delphinidin, pelargonidin, peonidin and petunidin as substrates in the presence of UDP-Gal, but barely active on malvidin. Can also use UDP-glucose (UDP-Glu) as sugar donor with cyanidin, delphinidin, pelargonidin, peonidin and petunidin as substrates, but not active on malvidin. The sequence is that of Anthocyanidin 3-O-galactosyltransferase 3GT6 from Rhododendron delavayi (Rhododendron).